The sequence spans 494 residues: Tyrosinase (494 aa).

Cu cation is bound by residues H38, H53, C64, H224, H228, and H256.

Belongs to the tyrosinase family. Requires Cu(2+) as cofactor.

It catalyses the reaction 2 L-dopa + O2 = 2 L-dopaquinone + 2 H2O. It carries out the reaction L-tyrosine + O2 = L-dopaquinone + H2O. The chain is Tyrosinase (mepA) from Rhizobium meliloti (Ensifer meliloti).